We begin with the raw amino-acid sequence, 454 residues long: Cobyrinate a,c-diamide synthase (454 aa).

One can recognise a GATase cobBQ-type domain in the interval 247–442 (KIGIAMDSAF…IHAHWASNPN (196 aa)). Cys-329 serves as the catalytic Nucleophile.

This sequence belongs to the CobB/CbiA family. Mg(2+) is required as a cofactor.

It carries out the reaction cob(II)yrinate + 2 L-glutamine + 2 ATP + 2 H2O = cob(II)yrinate a,c diamide + 2 L-glutamate + 2 ADP + 2 phosphate + 2 H(+). It functions in the pathway cofactor biosynthesis; adenosylcobalamin biosynthesis; cob(II)yrinate a,c-diamide from sirohydrochlorin (anaerobic route): step 10/10. Functionally, catalyzes the ATP-dependent amidation of the two carboxylate groups at positions a and c of cobyrinate, using either L-glutamine or ammonia as the nitrogen source. This is Cobyrinate a,c-diamide synthase from Leptospira interrogans serogroup Icterohaemorrhagiae serovar Lai (strain 56601).